Here is a 252-residue protein sequence, read N- to C-terminus: Triosephosphate isomerase (252 aa).

10-12 (NWK) lines the substrate pocket. Histidine 96 serves as the catalytic Electrophile. The Proton acceptor role is filled by glutamate 168. Substrate contacts are provided by residues glycine 174, serine 214, and 235–236 (GG).

Belongs to the triosephosphate isomerase family. As to quaternary structure, homodimer.

It is found in the cytoplasm. The catalysed reaction is D-glyceraldehyde 3-phosphate = dihydroxyacetone phosphate. It functions in the pathway carbohydrate biosynthesis; gluconeogenesis. The protein operates within carbohydrate degradation; glycolysis; D-glyceraldehyde 3-phosphate from glycerone phosphate: step 1/1. Functionally, involved in the gluconeogenesis. Catalyzes stereospecifically the conversion of dihydroxyacetone phosphate (DHAP) to D-glyceraldehyde-3-phosphate (G3P). The polypeptide is Triosephosphate isomerase (Streptococcus thermophilus (strain CNRZ 1066)).